Reading from the N-terminus, the 366-residue chain is MTDLDNLKADLIGQISQSGDLAGLESVRVHALGKQGVVTALLKSLGKMTPEERQEKGPVIHSLRQAVAQGIADRKQALETALLNEKLASETIDLSLPSPKMPKGSLHPVSQVMDELAEIFADLGFAVASGPEIEDEWHNFSALNIPESHPARAMHDTFYFEPQEGASDKGDKGRMLLRTHTSPVQIRTMQGQEPPIRIIAPGRTYRSDSDATHTPMFHQVEGLVIDKGVHLGHLKWTLETFVRAYFERDDIVLRLRPSYFPFTEPSMEVDVGYTLEKGRRIIGGKQPDGWMEILGSGMVHPNVITACGLDPNVWQGFAFGCGIDRLAMLKYGMDDLRAFFDGDLRWLRHFGFAALDVPTLSGGVGA.

Residue glutamate 264 participates in Mg(2+) binding.

Belongs to the class-II aminoacyl-tRNA synthetase family. Phe-tRNA synthetase alpha subunit type 1 subfamily. As to quaternary structure, tetramer of two alpha and two beta subunits. The cofactor is Mg(2+).

The protein localises to the cytoplasm. It catalyses the reaction tRNA(Phe) + L-phenylalanine + ATP = L-phenylalanyl-tRNA(Phe) + AMP + diphosphate + H(+). This is Phenylalanine--tRNA ligase alpha subunit from Zymomonas mobilis subsp. mobilis (strain ATCC 31821 / ZM4 / CP4).